Here is a 108-residue protein sequence, read N- to C-terminus: ATP-dependent Clp protease adapter protein ClpS (108 aa).

A compositionally biased stretch (basic and acidic residues) spans 1-10; sequence MADSDKHGDE. Positions 1-21 are disordered; the sequence is MADSDKHGDEGPSTGVVVKAK.

The protein belongs to the ClpS family. Binds to the N-terminal domain of the chaperone ClpA.

Its function is as follows. Involved in the modulation of the specificity of the ClpAP-mediated ATP-dependent protein degradation. The sequence is that of ATP-dependent Clp protease adapter protein ClpS from Rhodospirillum centenum (strain ATCC 51521 / SW).